The following is a 222-amino-acid chain: MLPSLIQPCSWILLLLLVNSSLLWKNVASLPMCAMRNDRCFMFFEDTFELAGSLSHNISIEVSELFTEFEKHYSNVPGLRDKSPMRCHTSFLPTPENKEQARHIRYEALLKSGDMILDAWENPLDYLVSELSTIKNVPDIIISKATDIKKKINAVQNGVNALMSTMNGDEENKNPAWFLQSDNEDARIRSSYGMISCLDNDFKKVDIYLNILKCYMLKIDNC.

The signal sequence occupies residues 1 to 29 (MLPSLIQPCSWILLLLLVNSSLLWKNVAS). Cys-33 and Cys-40 are disulfide-bonded. An N-linked (GlcNAc...) asparagine glycan is attached at Asn-57. Cystine bridges form between Cys-87/Cys-197 and Cys-214/Cys-222.

Belongs to the somatotropin/prolactin family. Post-translationally, N-glycosylated and sialylated. In terms of tissue distribution, expressed in placenta (at protein level). Expressed in the tail hair follicle, with highest expression detected in the keratinocytes of the outer root sheath. Expressed in ear skin with lesser amounts in small intestine. Not detected in brain at 18 dpc, postnatal day 25 or postnatal day 55.

The protein resides in the secreted. This Mus musculus (Mouse) protein is Prolactin-2C5.